Reading from the N-terminus, the 297-residue chain is Ribosomal RNA small subunit methyltransferase A (297 aa).

6 residues coordinate S-adenosyl-L-methionine: Asn31, Leu33, Gly58, Glu79, Asp104, and Asn129.

Belongs to the class I-like SAM-binding methyltransferase superfamily. rRNA adenine N(6)-methyltransferase family. RsmA subfamily.

It is found in the cytoplasm. It carries out the reaction adenosine(1518)/adenosine(1519) in 16S rRNA + 4 S-adenosyl-L-methionine = N(6)-dimethyladenosine(1518)/N(6)-dimethyladenosine(1519) in 16S rRNA + 4 S-adenosyl-L-homocysteine + 4 H(+). Functionally, specifically dimethylates two adjacent adenosines (A1518 and A1519) in the loop of a conserved hairpin near the 3'-end of 16S rRNA in the 30S particle. May play a critical role in biogenesis of 30S subunits. The polypeptide is Ribosomal RNA small subunit methyltransferase A (Pediococcus pentosaceus (strain ATCC 25745 / CCUG 21536 / LMG 10740 / 183-1w)).